Here is a 217-residue protein sequence, read N- to C-terminus: Uracil-DNA glycosylase (217 aa).

Aspartate 62 functions as the Proton acceptor in the catalytic mechanism.

The protein belongs to the uracil-DNA glycosylase (UDG) superfamily. UNG family.

It localises to the cytoplasm. The enzyme catalyses Hydrolyzes single-stranded DNA or mismatched double-stranded DNA and polynucleotides, releasing free uracil.. Excises uracil residues from the DNA which can arise as a result of misincorporation of dUMP residues by DNA polymerase or due to deamination of cytosine. This Streptococcus thermophilus (strain ATCC BAA-491 / LMD-9) protein is Uracil-DNA glycosylase.